A 313-amino-acid polypeptide reads, in one-letter code: MERINSTLLTAFILTGIPYPLRLRTLFFVFFFLIYILTQLGNLLILITVWADPRLHARPMYIFLGVLSVIDMSISSIIVPRLMMNFTLGVKPIPFGGCVAQLYFYHFLGSTQCFLYTLMAYDRYLAICQPLRYPVLMTAKLSALLVAGAWMAGSIHGALQAILTFRLPYCGPNQVDYFFCDIPAVLRLACADTTVNELVTFVDIGVVVASCFSLILLSYIQIIQAILRIHTADGRRRAFSTCGAHVTVVTVYYVPCAFIYLRPETNSPLDGAAALVPTAITPFLNPLIYTLRNQEVKLALKRMLRSPRTPSEV.

Over 1 to 25 (MERINSTLLTAFILTGIPYPLRLRT) the chain is Extracellular. Residue asparagine 5 is glycosylated (N-linked (GlcNAc...) asparagine). Residues 26–46 (LFFVFFFLIYILTQLGNLLIL) form a helical membrane-spanning segment. The Cytoplasmic portion of the chain corresponds to 47-54 (ITVWADPR). The chain crosses the membrane as a helical span at residues 55 to 76 (LHARPMYIFLGVLSVIDMSISS). The Extracellular segment spans residues 77 to 100 (IIVPRLMMNFTLGVKPIPFGGCVA). An N-linked (GlcNAc...) asparagine glycan is attached at asparagine 85. Cysteine 98 and cysteine 190 form a disulfide bridge. A helical transmembrane segment spans residues 101–121 (QLYFYHFLGSTQCFLYTLMAY). The Cytoplasmic portion of the chain corresponds to 122–140 (DRYLAICQPLRYPVLMTAK). Residues 141 to 161 (LSALLVAGAWMAGSIHGALQA) traverse the membrane as a helical segment. At 162–198 (ILTFRLPYCGPNQVDYFFCDIPAVLRLACADTTVNEL) the chain is on the extracellular side. The chain crosses the membrane as a helical span at residues 199-218 (VTFVDIGVVVASCFSLILLS). Topologically, residues 219-238 (YIQIIQAILRIHTADGRRRA) are cytoplasmic. A helical transmembrane segment spans residues 239 to 259 (FSTCGAHVTVVTVYYVPCAFI). Over 260-270 (YLRPETNSPLD) the chain is Extracellular. The helical transmembrane segment at 271-291 (GAAALVPTAITPFLNPLIYTL) threads the bilayer. Over 292–313 (RNQEVKLALKRMLRSPRTPSEV) the chain is Cytoplasmic.

It belongs to the G-protein coupled receptor 1 family.

It is found in the cell membrane. Functionally, odorant receptor. This is Olfactory receptor 10G3 (OR10G3) from Homo sapiens (Human).